The following is a 419-amino-acid chain: MAQEVIKIRGGQALKGEVEISGAKNSAVAIIPATLLAQGQVKLEGLPQISDVETLVSLLEDLNIEARLNGKQLEVDTTQIENAPLPNNKVESLRASYYMMGAMLGRFKKCVIGLPGGCPLGPRPIDQHIKGFKALGAEIDESSNTSMKLVAKELRGAHIFLDMVSVGATINIMLAAVHAKGQTVIDNAAKEPEVVDVANFLMSMGADIRGAGTTSIKINGVEELKGSEYQIIPDRIEAGSYMCMAAAMGEEVILHNIVPKHVEALTVKLQELGVDIEIEDEKIIIRKQTPYKNVDIKTLVYPGFATDLQQPITPLLFMTEGPSFVTDTIYPARFKHVEELQRMGANIKSDEGTAVIKPSTLNGAEVYASDLRAGACLITAGLIAEGVTTIFNVKHIYRGYTNIVEHLKALGADIWTETV.

Position 24 to 25 (lysine 24 to asparagine 25) interacts with phosphoenolpyruvate. Residue arginine 94 coordinates UDP-N-acetyl-alpha-D-glucosamine. Cysteine 118 serves as the catalytic Proton donor. Cysteine 118 bears the 2-(S-cysteinyl)pyruvic acid O-phosphothioketal mark. UDP-N-acetyl-alpha-D-glucosamine-binding positions include arginine 123–glutamine 127, aspartate 307, and isoleucine 329.

The protein belongs to the EPSP synthase family. MurA subfamily.

The protein resides in the cytoplasm. The catalysed reaction is phosphoenolpyruvate + UDP-N-acetyl-alpha-D-glucosamine = UDP-N-acetyl-3-O-(1-carboxyvinyl)-alpha-D-glucosamine + phosphate. Its pathway is cell wall biogenesis; peptidoglycan biosynthesis. Its function is as follows. Cell wall formation. Adds enolpyruvyl to UDP-N-acetylglucosamine. This chain is UDP-N-acetylglucosamine 1-carboxyvinyltransferase 2, found in Staphylococcus epidermidis (strain ATCC 35984 / DSM 28319 / BCRC 17069 / CCUG 31568 / BM 3577 / RP62A).